Reading from the N-terminus, the 158-residue chain is UPF0262 protein Rsph17025_0594 (158 aa).

It belongs to the UPF0262 family.

This is UPF0262 protein Rsph17025_0594 from Cereibacter sphaeroides (strain ATCC 17025 / ATH 2.4.3) (Rhodobacter sphaeroides).